We begin with the raw amino-acid sequence, 549 residues long: Probable glucomannan 4-beta-mannosyltransferase 4 (549 aa).

The chain crosses the membrane as a helical span at residues 35-55; the sequence is VAPVLQFAVWACMAMSVMLVL. Aspartate 151 is an active-site residue. The substrate site is built by aspartate 210 and aspartate 212. Aspartate 304 is a catalytic residue. Helical transmembrane passes span 383–403, 406–426, 497–517, and 523–543; these read VVAP…SVMV, VSIP…MNAI, IYIP…YDLV, and YYLY…GFAG.

This sequence belongs to the glycosyltransferase 2 family. Plant cellulose synthase-like A subfamily.

Its subcellular location is the golgi apparatus membrane. It catalyses the reaction GDP-mannose + (glucomannan)n = GDP + (glucomannan)n+1.. Its function is as follows. Probable mannan synthase which consists of a 4-beta-mannosyltransferase activity on mannan using GDP-mannose. The beta-1,4-mannan product is the backbone for galactomannan synthesis by galactomannan galactosyltransferase. Galactomannan is a noncellulosic polysaccharides of plant cell wall. The sequence is that of Probable glucomannan 4-beta-mannosyltransferase 4 from Oryza sativa subsp. japonica (Rice).